The primary structure comprises 449 residues: Deoxyguanosinetriphosphate triphosphohydrolase-like protein (449 aa).

The segment at Met-1–Arg-27 is disordered. The segment covering Gln-7–Arg-27 has biased composition (basic and acidic residues). The region spanning Arg-59 to Ala-255 is the HD domain.

This sequence belongs to the dGTPase family. Type 2 subfamily.

This chain is Deoxyguanosinetriphosphate triphosphohydrolase-like protein, found in Shewanella baltica (strain OS223).